The chain runs to 492 residues: Trigger factor (492 aa).

The PPIase FKBP-type domain occupies 169-254; that stretch reads GDRVSIDYVG…VKEVSKPGEL (86 aa). Positions 441–492 are disordered; it reads LMADDEDAETTTKAKPAKKAAAKKAEAKANEDEAEEPKKKAAPKKKAAKDAE. The span at 463 to 479 shows a compositional bias: basic and acidic residues; the sequence is KKAEAKANEDEAEEPKK. The segment covering 480–492 has biased composition (basic residues); sequence KAAPKKKAAKDAE.

The protein belongs to the FKBP-type PPIase family. Tig subfamily.

The protein resides in the cytoplasm. The catalysed reaction is [protein]-peptidylproline (omega=180) = [protein]-peptidylproline (omega=0). In terms of biological role, involved in protein export. Acts as a chaperone by maintaining the newly synthesized protein in an open conformation. Functions as a peptidyl-prolyl cis-trans isomerase. This chain is Trigger factor, found in Mesorhizobium japonicum (strain LMG 29417 / CECT 9101 / MAFF 303099) (Mesorhizobium loti (strain MAFF 303099)).